Reading from the N-terminus, the 501-residue chain is Glycerol kinase (501 aa).

Residue Thr11 coordinates ADP. Thr11, Thr12, and Ser13 together coordinate ATP. A sn-glycerol 3-phosphate-binding site is contributed by Thr11. ADP is bound at residue Arg15. Positions 81, 82, 133, and 242 each coordinate sn-glycerol 3-phosphate. Residues Arg81, Glu82, Tyr133, Asp242, and Gln243 each contribute to the glycerol site. ADP contacts are provided by Thr264 and Gly307. ATP-binding residues include Thr264, Gly307, Gln311, and Gly409. ADP contacts are provided by Gly409 and Asn413.

This sequence belongs to the FGGY kinase family.

The catalysed reaction is glycerol + ATP = sn-glycerol 3-phosphate + ADP + H(+). It participates in polyol metabolism; glycerol degradation via glycerol kinase pathway; sn-glycerol 3-phosphate from glycerol: step 1/1. With respect to regulation, inhibited by fructose 1,6-bisphosphate (FBP). In terms of biological role, key enzyme in the regulation of glycerol uptake and metabolism. Catalyzes the phosphorylation of glycerol to yield sn-glycerol 3-phosphate. The chain is Glycerol kinase from Borreliella burgdorferi (strain ATCC 35210 / DSM 4680 / CIP 102532 / B31) (Borrelia burgdorferi).